Here is a 421-residue protein sequence, read N- to C-terminus: UDP-N-acetylglucosamine 1-carboxyvinyltransferase (421 aa).

Residue 22-23 (KN) coordinates phosphoenolpyruvate. Arginine 92 provides a ligand contact to UDP-N-acetyl-alpha-D-glucosamine. Cysteine 116 serves as the catalytic Proton donor. Cysteine 116 carries the post-translational modification 2-(S-cysteinyl)pyruvic acid O-phosphothioketal. Aspartate 306 and valine 328 together coordinate UDP-N-acetyl-alpha-D-glucosamine.

Belongs to the EPSP synthase family. MurA subfamily.

It localises to the cytoplasm. It catalyses the reaction phosphoenolpyruvate + UDP-N-acetyl-alpha-D-glucosamine = UDP-N-acetyl-3-O-(1-carboxyvinyl)-alpha-D-glucosamine + phosphate. It functions in the pathway cell wall biogenesis; peptidoglycan biosynthesis. Functionally, cell wall formation. Adds enolpyruvyl to UDP-N-acetylglucosamine. This chain is UDP-N-acetylglucosamine 1-carboxyvinyltransferase, found in Thermotoga petrophila (strain ATCC BAA-488 / DSM 13995 / JCM 10881 / RKU-1).